The following is a 181-amino-acid chain: Phospholipase A2 inhibitor gamma subunit B (181 aa).

8 disulfides stabilise this stretch: C3-C27, C6-C13, C20-C48, C54-C75, C76-C81, C101-C126, C119-C146, and C152-C172.

This sequence belongs to the CNF-like-inhibitor family. Heterotrimer of 2 subunits A and 1 subunit B. Expressed by the liver.

The protein localises to the secreted. Its function is as follows. Strongly inhibits its own venom PLA2 and all other PLA2s tested including Elapid, Crotalid and Viperid venom PLA2s, as well as honeybee PLA2s. This Laticauda semifasciata (Black-banded sea krait) protein is Phospholipase A2 inhibitor gamma subunit B.